The sequence spans 330 residues: Tyrosine-protein phosphatase yvh1 (330 aa).

Residues 45–187 (NDLSEISKNL…LRVYFECNYQ (143 aa)) enclose the Tyrosine-protein phosphatase domain. The active-site Phosphocysteine intermediate is Cys131.

The protein belongs to the protein-tyrosine phosphatase family. Non-receptor class dual specificity subfamily.

It localises to the cytoplasm. It is found in the nucleus. It catalyses the reaction O-phospho-L-tyrosyl-[protein] + H2O = L-tyrosyl-[protein] + phosphate. May be directly involved in signal transduction and/or cell cycle regulation. It is necessary for maintaining growth rate or spore germination. Could show both activity toward tyrosine-protein phosphate as well as with serine-protein phosphate. This chain is Tyrosine-protein phosphatase yvh1 (yvh1), found in Schizosaccharomyces pombe (strain 972 / ATCC 24843) (Fission yeast).